The primary structure comprises 399 residues: MSNNLVLVLNCGSSSLKFAVIDAQTGDDQISGLAECFGLEDSRIKWKINGEKHEAALGAFTAHREAVEYIVNKILAEQPELAAKIQAVGHRIVHGGEKFTRSVIIDESVIKGIEDCASLAPLHNPAHLIGIRAAIASFPKLPQVAVFDTAFHQSMPDRAYVYALPYKLYREHGIRRYGMHGTSHLFVSREAAKMLNKPIEETNVICAHLGNGASVTAIKGGKSVDTSMGLTPLEGLVMGTRCGDIDPSIIYHLVHQLGYTLEEVNNLMNKQSGLLGISELTNDCRGIEEGYADGHKGATLALEIFCYRLAKYIASYTVPLGRLDAVVFTGGIGENSDLIREKVLNMLEIFNFHVDSERNKAARFGKKGIITQDKGTIAMVIPTNEEWVIAEDSIKLINK.

N10 serves as a coordination point for Mg(2+). Residue K17 coordinates ATP. R91 provides a ligand contact to substrate. The active-site Proton donor/acceptor is D148. ATP-binding positions include 208–212 (HLGNG), 283–285 (DCR), and 331–335 (GIGEN). Residue E385 participates in Mg(2+) binding.

It belongs to the acetokinase family. Homodimer. Requires Mg(2+) as cofactor. The cofactor is Mn(2+).

It localises to the cytoplasm. The enzyme catalyses acetate + ATP = acetyl phosphate + ADP. It functions in the pathway metabolic intermediate biosynthesis; acetyl-CoA biosynthesis; acetyl-CoA from acetate: step 1/2. Its function is as follows. Catalyzes the formation of acetyl phosphate from acetate and ATP. Can also catalyze the reverse reaction. This is Acetate kinase from Shewanella baltica (strain OS223).